The chain runs to 887 residues: Valine--tRNA ligase (887 aa).

Residues 45 to 55 (PNVTGILHMGH) carry the 'HIGH' region motif. Residues 528 to 532 (KMSKS) carry the 'KMSKS' region motif. ATP is bound at residue lysine 531. Residues 817 to 887 (TGLLNNEAEI…LKESLKSFEE (71 aa)) adopt a coiled-coil conformation.

The protein belongs to the class-I aminoacyl-tRNA synthetase family. ValS type 1 subfamily. As to quaternary structure, monomer.

It is found in the cytoplasm. The enzyme catalyses tRNA(Val) + L-valine + ATP = L-valyl-tRNA(Val) + AMP + diphosphate. Catalyzes the attachment of valine to tRNA(Val). As ValRS can inadvertently accommodate and process structurally similar amino acids such as threonine, to avoid such errors, it has a 'posttransfer' editing activity that hydrolyzes mischarged Thr-tRNA(Val) in a tRNA-dependent manner. This Fusobacterium nucleatum subsp. nucleatum (strain ATCC 25586 / DSM 15643 / BCRC 10681 / CIP 101130 / JCM 8532 / KCTC 2640 / LMG 13131 / VPI 4355) protein is Valine--tRNA ligase.